The following is a 381-amino-acid chain: uncharacterized protein (381 aa).

The first 16 residues, Met1–Ala16, serve as a signal peptide directing secretion. The Lumenal segment spans residues His17–Asn303. Cys118 and Cys149 are oxidised to a cystine. N-linked (GlcNAc...) asparagine glycosylation is found at Asn133, Asn192, Asn225, Asn243, Asn246, and Asn287. A helical transmembrane segment spans residues Gln304–Phe324. Residues Lys325–Met359 are Cytoplasmic-facing. Residues Asp360–Leu380 form a helical membrane-spanning segment. A topological domain (lumenal) is located at residue Lys381.

This sequence belongs to the calreticulin family.

The protein resides in the endoplasmic reticulum membrane. This is an uncharacterized protein from Schizosaccharomyces pombe (strain 972 / ATCC 24843) (Fission yeast).